The chain runs to 93 residues: Small ribosomal subunit protein uS17 (93 aa).

The protein belongs to the universal ribosomal protein uS17 family. Part of the 30S ribosomal subunit.

Functionally, one of the primary rRNA binding proteins, it binds specifically to the 5'-end of 16S ribosomal RNA. The chain is Small ribosomal subunit protein uS17 from Bordetella bronchiseptica (strain ATCC BAA-588 / NCTC 13252 / RB50) (Alcaligenes bronchisepticus).